Reading from the N-terminus, the 193-residue chain is Proton-translocating ferredoxin:NAD(+) oxidoreductase complex subunit A (193 aa).

The next 6 helical transmembrane spans lie at 11-31 (AVVV…FFGV), 39-59 (VGMG…AWVV), 62-82 (FVLI…LLIA), 102-122 (MWGI…VPIL), 134-154 (VVNA…MASL), and 171-191 (GVAF…SGMI).

Belongs to the NqrDE/RnfAE family. The complex is composed of six subunits: RnfA, RnfB, RnfC, RnfD, RnfE and RnfG.

It is found in the cell membrane. Its function is as follows. Part of a membrane-bound complex that couples electron transfer with translocation of ions across the membrane. Couples electron transfer from reduced ferredoxin to NAD(+) with translocation of H(+) out of the cell. Essential for energy conservation during autotrophic growth. Contributes to ATP synthesis during heterotrophic growth. This Clostridium ljungdahlii (strain ATCC 55383 / DSM 13528 / PETC) protein is Proton-translocating ferredoxin:NAD(+) oxidoreductase complex subunit A.